We begin with the raw amino-acid sequence, 353 residues long: Inactive metacaspase-4 (353 aa).

Glycine 2 carries N-myristoyl glycine lipidation.

Belongs to the peptidase C14B family. In terms of processing, palmitoylated. Proteolytic cleavage by MCA3 occurs prior or during secretion and requires MCA4 membrane localization. Cleavage is dispensable for secretion and parasite growth and virulence in the mammalian host. In vitro, can be cleaved by MCA2 but specifically cleaved by MCA3 in vivo.

The protein localises to the cell projection. Its subcellular location is the cilium. The protein resides in the flagellum membrane. It is found in the secreted. Its function is as follows. Inactive metacaspase which plays a role in parasite bloodstream form growth and in parasite virulence within the mammalian host. The sequence is that of Inactive metacaspase-4 from Trypanosoma brucei brucei.